Reading from the N-terminus, the 104-residue chain is L-rhamnose mutarotase (104 aa).

Tyrosine 18 serves as a coordination point for substrate. The active-site Proton donor is histidine 22. Residues tyrosine 41 and 76–77 (WW) each bind substrate.

Belongs to the rhamnose mutarotase family. As to quaternary structure, homodimer.

It is found in the cytoplasm. The catalysed reaction is alpha-L-rhamnose = beta-L-rhamnose. It functions in the pathway carbohydrate metabolism; L-rhamnose metabolism. Involved in the anomeric conversion of L-rhamnose. In Acidiphilium cryptum (strain JF-5), this protein is L-rhamnose mutarotase.